The chain runs to 249 residues: Phosphoadenosine 5'-phosphosulfate reductase (249 aa).

The Nucleophile; cysteine thiosulfonate intermediate role is filled by C230.

The protein belongs to the PAPS reductase family. CysH subfamily.

The protein localises to the cytoplasm. The catalysed reaction is [thioredoxin]-disulfide + sulfite + adenosine 3',5'-bisphosphate + 2 H(+) = [thioredoxin]-dithiol + 3'-phosphoadenylyl sulfate. Its pathway is sulfur metabolism; hydrogen sulfide biosynthesis; sulfite from sulfate: step 3/3. Functionally, catalyzes the formation of sulfite from phosphoadenosine 5'-phosphosulfate (PAPS) using thioredoxin as an electron donor. In Synechocystis sp. (strain ATCC 27184 / PCC 6803 / Kazusa), this protein is Phosphoadenosine 5'-phosphosulfate reductase.